A 585-amino-acid chain; its full sequence is Probable glucomannan 4-beta-mannosyltransferase 7 (585 aa).

A helical transmembrane segment spans residues Val87–Val107. The active site involves Asp188. Substrate is bound by residues Asp247 and Asp249. Asp341 is an active-site residue. Transmembrane regions (helical) follow at residues Val420–Ile440, Leu443–Ile463, Leu534–His554, and Leu563–Cys583.

Belongs to the glycosyltransferase 2 family. Plant cellulose synthase-like A subfamily.

It is found in the golgi apparatus membrane. The enzyme catalyses GDP-mannose + (glucomannan)n = GDP + (glucomannan)n+1.. In terms of biological role, probable mannan synthase which consists of a 4-beta-mannosyltransferase activity on mannan using GDP-mannose. The beta-1,4-mannan product is the backbone for galactomannan synthesis by galactomannan galactosyltransferase. Galactomannan is a noncellulosic polysaccharides of plant cell wall. This Oryza sativa subsp. japonica (Rice) protein is Probable glucomannan 4-beta-mannosyltransferase 7.